Reading from the N-terminus, the 598-residue chain is NADH-quinone oxidoreductase subunit C/D (598 aa).

The segment at 1-190 (MSIFTQEVSA…EAFSLDDERL (190 aa)) is NADH dehydrogenase I subunit C. The tract at residues 214–598 (DYLFLNLGPN…IDFVMADVDR (385 aa)) is NADH dehydrogenase I subunit D.

The protein in the N-terminal section; belongs to the complex I 30 kDa subunit family. In the C-terminal section; belongs to the complex I 49 kDa subunit family. NDH-1 is composed of 13 different subunits. Subunits NuoB, CD, E, F, and G constitute the peripheral sector of the complex.

Its subcellular location is the cell inner membrane. The catalysed reaction is a quinone + NADH + 5 H(+)(in) = a quinol + NAD(+) + 4 H(+)(out). In terms of biological role, NDH-1 shuttles electrons from NADH, via FMN and iron-sulfur (Fe-S) centers, to quinones in the respiratory chain. The immediate electron acceptor for the enzyme in this species is believed to be ubiquinone. Couples the redox reaction to proton translocation (for every two electrons transferred, four hydrogen ions are translocated across the cytoplasmic membrane), and thus conserves the redox energy in a proton gradient. The protein is NADH-quinone oxidoreductase subunit C/D of Shewanella woodyi (strain ATCC 51908 / MS32).